A 465-amino-acid chain; its full sequence is L-cystine uptake protein TcyP (465 aa).

10 helical membrane-spanning segments follow: residues 3–23, 34–54, 73–93, 105–125, 184–204, 224–246, 263–283, 338–358, 370–390, and 394–414; these read LFLTLLIIAIVLAVAGLLFYM, VLLALGAGVVYGLLLQFFFAP, YVRFLQMIVMPLIFISILSAF, ISALILGTLIATTAIAAAIGI, PTSAIGVVIFSAFLGVAYLGV, AIIMRVVTLILRLTPYGVLAIMT, FVLASYAALIVMFVIHLIILA, LSIGQNGCAGIYPAMLAVMIA, FILLLIVVIAISSFGVAGVGG, and FAAILVLSALDFPIALAGLLI.

It belongs to the dicarboxylate/amino acid:cation symporter (DAACS) (TC 2.A.23) family.

Its subcellular location is the membrane. In terms of biological role, mediates uptake of L-cystine, the oxidized form of L-cysteine. This Shouchella clausii (strain KSM-K16) (Alkalihalobacillus clausii) protein is L-cystine uptake protein TcyP.